We begin with the raw amino-acid sequence, 130 residues long: Small ribosomal subunit protein uS9 (130 aa).

The interval 111-130 is disordered; the sequence is VERKKVGLRKARRRPQFSKR. Over residues 116–130 the composition is skewed to basic residues; sequence VGLRKARRRPQFSKR.

Belongs to the universal ribosomal protein uS9 family.

This Enterobacter sp. (strain 638) protein is Small ribosomal subunit protein uS9.